A 375-amino-acid polypeptide reads, in one-letter code: Growth/differentiation factor 8 (375 aa).

A signal peptide spans 1 to 18; the sequence is MQRLQICVYIYLFVLIVA. The propeptide occupies 19 to 266; the sequence is GPVDLSENSE…VTDTPKRSRR (248 aa). Residue N71 is glycosylated (N-linked (GlcNAc...) asparagine). 3 cysteine pairs are disulfide-bonded: C281–C340, C309–C372, and C313–C374.

The protein belongs to the TGF-beta family. Homodimer; disulfide-linked. Interacts with WFIKKN2, leading to inhibit its activity. Interacts with FSTL3. In terms of processing, synthesized as large precursor molecule that undergoes proteolytic cleavage to generate an N-terminal propeptide and a disulfide linked C-terminal dimer, which is the biologically active molecule. The circulating form consists of a latent complex of the C-terminal dimer and other proteins, including its propeptide, which maintain the C-terminal dimer in a latent, inactive state. Ligand activation requires additional cleavage of the prodomain by a tolloid-like metalloproteinase.

It localises to the secreted. Acts specifically as a negative regulator of skeletal muscle growth. The sequence is that of Growth/differentiation factor 8 (MSTN) from Vulpes vulpes (Red fox).